Consider the following 189-residue polypeptide: Chitin synthase 2 (189 aa).

It belongs to the chitin synthase family. Class II subfamily.

Its subcellular location is the cell membrane. It catalyses the reaction [(1-&gt;4)-N-acetyl-beta-D-glucosaminyl](n) + UDP-N-acetyl-alpha-D-glucosamine = [(1-&gt;4)-N-acetyl-beta-D-glucosaminyl](n+1) + UDP + H(+). In terms of biological role, polymerizes chitin, a structural polymer of the cell wall and septum, by transferring the sugar moiety of UDP-GlcNAc to the non-reducing end of the growing chitin polymer. This chain is Chitin synthase 2 (CHS2), found in Xylohypha bantiana.